We begin with the raw amino-acid sequence, 73 residues long: uncharacterized protein (73 aa).

A signal peptide spans 1-23 (MLHLIKMVSKIVLLITLVFIVSA).

This is an uncharacterized protein from Acheta domesticus (House cricket).